A 274-amino-acid chain; its full sequence is Oxidized low-density lipoprotein receptor 1 (274 aa).

A compositionally biased stretch (basic and acidic residues) spans 1–16 (MAVDDLKVKPMKDQPD). Residues 1 to 25 (MAVDDLKVKPMKDQPDQKSNGKKPK) are disordered. At 1-31 (MAVDDLKVKPMKDQPDQKSNGKKPKGLRFLS) the chain is on the cytoplasmic side. Residues 32-54 (SPWWCPAAVALGVLCLGSLMTII) form a helical; Signal-anchor for type II membrane protein membrane-spanning segment. 2 S-palmitoyl cysteine lipidation sites follow: C36 and C46. The neck stretch occupies residues 55–150 (MLGMQLLQVS…SGPCPEDWLW (96 aa)). The Extracellular segment spans residues 55 to 274 (MLGMQLLQVS…QKKANLLRSE (220 aa)). 2 N-linked (GlcNAc...) asparagine glycosylation sites follow: N73 and N139. Positions 84–139 (QVLAQQQAEAASQESQRELKEMIETLAKRLDEKSKKQMELNHQYLNLQEALKRMDN) form a coiled coil. Intrachain disulfides connect C144–C155, C172–C264, and C243–C256. In terms of domain architecture, C-type lectin spans 151–265 (HGKNCYLFSS…CILVAYSICQ (115 aa)).

Homodimer; disulfide-linked. May form a hexamer composed of 3 homodimers. Interacts with HSP70. N-glycosylated.

The protein localises to the cell membrane. It localises to the membrane raft. It is found in the secreted. Functionally, receptor that mediates the recognition, internalization and degradation of oxidatively modified low density lipoprotein (oxLDL) by vascular endothelial cells. OxLDL is a marker of atherosclerosis that induces vascular endothelial cell activation and dysfunction, resulting in pro-inflammatory responses, pro-oxidative conditions and apoptosis. Its association with oxLDL induces the activation of NF-kappa-B through an increased production of intracellular reactive oxygen and a variety of pro-atherogenic cellular responses including a reduction of nitric oxide (NO) release, monocyte adhesion and apoptosis. In addition to binding oxLDL, it acts as a receptor for the HSP70 protein involved in antigen cross-presentation to naive T-cells in dendritic cells, thereby participating in cell-mediated antigen cross-presentation. Also involved in inflammatory process, by acting as a leukocyte-adhesion molecule at the vascular interface in endotoxin-induced inflammation. Also acts as a receptor for advanced glycation end (AGE) products, activated platelets, monocytes, apoptotic cells and both Gram-negative and Gram-positive bacteria. This Oryctolagus cuniculus (Rabbit) protein is Oxidized low-density lipoprotein receptor 1 (OLR1).